Here is a 708-residue protein sequence, read N- to C-terminus: Polyribonucleotide nucleotidyltransferase (708 aa).

Residues aspartate 488 and aspartate 494 each coordinate Mg(2+). Positions 555 to 615 constitute a KH domain; that stretch reads PIIKVTKVDP…ENVDKAIELI (61 aa). Residues 625 to 692 form the S1 motif domain; it reads GEVLEGKVTR…DLGRLQFKRV (68 aa).

Belongs to the polyribonucleotide nucleotidyltransferase family. Mg(2+) serves as cofactor.

It is found in the cytoplasm. The enzyme catalyses RNA(n+1) + phosphate = RNA(n) + a ribonucleoside 5'-diphosphate. Involved in mRNA degradation. Catalyzes the phosphorolysis of single-stranded polyribonucleotides processively in the 3'- to 5'-direction. In Thermotoga petrophila (strain ATCC BAA-488 / DSM 13995 / JCM 10881 / RKU-1), this protein is Polyribonucleotide nucleotidyltransferase.